The following is a 979-amino-acid chain: Protein argonaute PNH1 (979 aa).

A disordered region spans residues 1–95 (MLEVLDMAPP…GGRAGAGPGP (95 aa)). A compositionally biased stretch (low complexity) spans 54–67 (AETAAATAAVAPPE). Positions 77–86 (GRRRGGRGRG) are enriched in basic residues. The region spanning 333 to 446 (PVIEFVAQIL…LPMEACKIVE (114 aa)) is the PAZ domain. One can recognise a Piwi domain in the interval 620–941 (LLLAILPDNN…AAFRARFYME (322 aa)).

Belongs to the argonaute family. Ago subfamily.

It localises to the cytoplasm. Functionally, probably involved in the RNA silencing pathway. May bind to short RNAs such as microRNAs (miRNAs) or short interfering RNAs (siRNAs), and represses the translation of mRNAs which are complementary to them. Plays a role in the maintenance of the indeterminate state of the stem cells in the shoot apical meristem (SAM). Regulates leaf formation through vascular development and may be involved in determining the central domain of the leaf founder region. The protein is Protein argonaute PNH1 (PHN1) of Oryza sativa subsp. japonica (Rice).